Here is a 292-residue protein sequence, read N- to C-terminus: Ribosomal protein L11 methyltransferase (292 aa).

4 residues coordinate S-adenosyl-L-methionine: threonine 144, glycine 165, aspartate 187, and asparagine 229.

Belongs to the methyltransferase superfamily. PrmA family.

The protein localises to the cytoplasm. The enzyme catalyses L-lysyl-[protein] + 3 S-adenosyl-L-methionine = N(6),N(6),N(6)-trimethyl-L-lysyl-[protein] + 3 S-adenosyl-L-homocysteine + 3 H(+). Functionally, methylates ribosomal protein L11. The protein is Ribosomal protein L11 methyltransferase of Pseudomonas fluorescens (strain SBW25).